Consider the following 360-residue polypeptide: Nicotinate-nucleotide--dimethylbenzimidazole phosphoribosyltransferase (360 aa).

Residue glutamate 327 is the Proton acceptor of the active site.

The protein belongs to the CobT family.

It carries out the reaction 5,6-dimethylbenzimidazole + nicotinate beta-D-ribonucleotide = alpha-ribazole 5'-phosphate + nicotinate + H(+). It functions in the pathway nucleoside biosynthesis; alpha-ribazole biosynthesis; alpha-ribazole from 5,6-dimethylbenzimidazole: step 1/2. Its function is as follows. Catalyzes the synthesis of alpha-ribazole-5'-phosphate from nicotinate mononucleotide (NAMN) and 5,6-dimethylbenzimidazole (DMB). This chain is Nicotinate-nucleotide--dimethylbenzimidazole phosphoribosyltransferase, found in Shewanella baltica (strain OS223).